We begin with the raw amino-acid sequence, 832 residues long: Cadherin-17 (832 aa).

A signal peptide spans 1–22 (MILQAHLHSLCLLMLYLATGYG). The Extracellular segment spans residues 23–787 (QEGKFSGPLK…HQTGIPTVGM (765 aa)). 7 consecutive Cadherin domains span residues 30-128 (PLKP…TFLQ), 129-244 (SKYE…APKP), 245-340 (VEMV…PPTC), 341-449 (PSPV…IPIF), 450-566 (EKSD…APQF), 567-667 (SQHV…PPRL), and 668-777 (AKDY…RPAG). Asn-149, Asn-184, Asn-250, Asn-419, Asn-456, Asn-546, Asn-587, and Asn-722 each carry an N-linked (GlcNAc...) asparagine glycan. A helical membrane pass occupies residues 788-808 (AVGILLTTLLVIGIILAVVFI). Topologically, residues 809–832 (RIKKDKGKDNVESAQASEVKPLRS) are cytoplasmic.

In terms of tissue distribution, expressed in the gastrointestinal tract and pancreatic duct. Not detected in kidney, lung, liver, brain, adrenal gland and skin.

Its subcellular location is the cell membrane. In terms of biological role, cadherins are calcium-dependent cell adhesion proteins. They preferentially interact with themselves in a homophilic manner in connecting cells; cadherins may thus contribute to the sorting of heterogeneous cell types. LI-cadherin may have a role in the morphological organization of liver and intestine. Involved in intestinal peptide transport. The protein is Cadherin-17 (CDH17) of Homo sapiens (Human).